We begin with the raw amino-acid sequence, 159 residues long: Respiratory supercomplex factor 1, mitochondrial (159 aa).

An HIG1 domain is found at 5–96 (PSSFDVTERD…TSGKELKAKE (92 aa)). 2 helical membrane-spanning segments follow: residues 32–52 (PLVPIGCLLTTGAVILAAQNV) and 68–88 (VGLQAATLVALVAGSFIYGTS). The stretch at 88–159 (SGKELKAKEE…SDLENKLGKK (72 aa)) forms a coiled coil.

This sequence belongs to the RCF1 family. In terms of assembly, associates with the respiratory chain complex III/complex IV supercomplex. Interacts with COX3.

It localises to the mitochondrion membrane. Functionally, cytochrome c oxidase subunit required for growth under hypoxic conditions. Involved in the assembly of the Complex III-Complex IV supercomplex, as well as in the recruitment of COX13 and RCF2 into cytochrome c oxidase. May also be required for late-stage assembly of the COX12 and COX13 subunits and for cytochrome c oxidase activity. In Saccharomyces cerevisiae (strain RM11-1a) (Baker's yeast), this protein is Respiratory supercomplex factor 1, mitochondrial (RCF1).